A 605-amino-acid chain; its full sequence is Endonuclease 8-like 3 (605 aa).

Residue V2 is the Schiff-base intermediate with DNA; via amino nitrogen of the active site. Residues N192 and R271 each contribute to the DNA site. The FPG-type zinc finger occupies 247–281 (KVYKRPNCGQCHCRITVCRFGDNNRMTYFCPHCQK). The RanBP2-type zinc-finger motif lies at 317 to 346 (SEEHWTCVVCTLINKPSSKACDACLTSRPI). At S450 the chain carries Phosphoserine. Residues 456-477 (ESKLFSPAHKKPKTAQYSSPEL) form a disordered region. Zn(2+) contacts are provided by C507, H510, C533, C541, C554, H556, C579, and C587. 2 consecutive GRF-type zinc fingers follow at residues 507-550 (CSKH…ADLS) and 554-596 (CNHG…AENG).

It belongs to the FPG family. In terms of tissue distribution, expressed in keratinocytes and embryonic fibroblasts (at protein level). Also detected in thymus, testis and fetal lung primary fibroblasts.

The protein localises to the nucleus. It is found in the chromosome. It carries out the reaction 2'-deoxyribonucleotide-(2'-deoxyribose 5'-phosphate)-2'-deoxyribonucleotide-DNA = a 3'-end 2'-deoxyribonucleotide-(2,3-dehydro-2,3-deoxyribose 5'-phosphate)-DNA + a 5'-end 5'-phospho-2'-deoxyribonucleoside-DNA + H(+). Functionally, DNA glycosylase which prefers single-stranded DNA (ssDNA), or partially ssDNA structures such as bubble and fork structures, to double-stranded DNA (dsDNA). Mediates interstrand cross-link repair in response to replication stress: acts by mediating DNA glycosylase activity, cleaving one of the two N-glycosyl bonds comprising the interstrand cross-link, which avoids the formation of a double-strand break but generates an abasic site that is bypassed by translesion synthesis polymerases. In vitro, displays strong glycosylase activity towards the hydantoin lesions spiroiminodihydantoin (Sp) and guanidinohydantoin (Gh) in both ssDNA and dsDNA; also recognizes FapyA, FapyG, 5-OHU, 5-OHC, 5-OHMH, Tg and 8-oxoA lesions in ssDNA. No activity on 8-oxoG detected. Also shows weak DNA-(apurinic or apyrimidinic site) lyase activity. In vivo, appears to be the primary enzyme involved in removing Sp and Gh from ssDNA in neonatal tissues. This chain is Endonuclease 8-like 3 (NEIL3), found in Homo sapiens (Human).